A 317-amino-acid polypeptide reads, in one-letter code: MASATNSSLSLMLLVAAAMASVASAQLSATFYDTSCPNALSTIKSVITAAVNSEARMGASLLRLHFHDCFVQGCDASVLLSGQEQNAGPNVGSLRGFSVIDNAKARVEAICNQTVSCADILAVAARDSVVALGGPSWTVLLGRRDSTTASEALANTDLPAPSSSLAELIGNFSRKGLDATDMVALSGAHTIGQAQCQNFRDRIYNETNIDSAFATQRQANCPRPTGSGDSNLAPLDTTTPNAFDNAYYSNLLSNKGLLHSDQVLFNGGSADNTVRNFASNAAAFSSAFTTAMVKMGNISPLTGTQGQIRLSCSKVNS.

A signal peptide spans 1–25; the sequence is MASATNSSLSLMLLVAAAMASVASA. The residue at position 26 (Gln-26) is a Pyrrolidone carboxylic acid. 2 disulfides stabilise this stretch: Cys-36-Cys-111 and Cys-69-Cys-74. The active-site Proton acceptor is the His-67. Residues Asp-68, Val-71, Gly-73, Asp-75, and Ser-77 each contribute to the Ca(2+) site. A glycan (N-linked (GlcNAc...) asparagine) is linked at Asn-112. Disulfide bonds link Cys-117/Cys-312 and Cys-196/Cys-221. Pro-159 provides a ligand contact to substrate. The N-linked (GlcNAc...) asparagine glycan is linked to Asn-171. His-189 provides a ligand contact to heme b. Ca(2+) is bound at residue Thr-190. Asn-205 is a glycosylation site (N-linked (GlcNAc...) asparagine). Positions 236, 239, and 244 each coordinate Ca(2+).

This sequence belongs to the peroxidase family. Classical plant (class III) peroxidase subfamily. Heme b is required as a cofactor. Requires Ca(2+) as cofactor.

Its subcellular location is the secreted. It catalyses the reaction H2O2 + AH2 = A + 2 H2O. Removal of H(2)O(2), oxidation of toxic reductants, biosynthesis and degradation of lignin, suberization, auxin catabolism, response to environmental stresses such as wounding, pathogen attack and oxidative stress. These functions might be dependent on each isozyme/isoform in each plant tissue. This Oryza sativa subsp. japonica (Rice) protein is Peroxidase 22.3.